Reading from the N-terminus, the 605-residue chain is Poly(3-hydroxyalkanoate) polymerase (605 aa).

One can recognise an AB hydrolase-1 domain in the interval 319–527 (IETAIDMIGV…VLAGSGHIAG (209 aa)). C341 is a catalytic residue.

Belongs to the PHA/PHB synthase family.

The protein localises to the cytoplasm. This is Poly(3-hydroxyalkanoate) polymerase (phaC) from Methylorubrum extorquens (Methylobacterium dichloromethanicum).